The primary structure comprises 326 residues: Peroxidase 3 (326 aa).

Residues Met1–Ala24 form the signal peptide. Intrachain disulfides connect Cys35/Cys113, Cys68/Cys73, Cys119/Cys321, and Cys198/Cys231. Residue His66 is the Proton acceptor of the active site. Residues Asp67, Val70, Gly72, Asp74, and Ser76 each contribute to the Ca(2+) site. 2 N-linked (GlcNAc...) asparagine glycosylation sites follow: Asn80 and Asn138. Residue Pro161 participates in substrate binding. A glycan (N-linked (GlcNAc...) asparagine) is linked at Asn166. His191 lines the heme b pocket. Ca(2+) is bound at residue Thr192. 2 N-linked (GlcNAc...) asparagine glycosylation sites follow: Asn207 and Asn237. Residues Asp244, Ser247, and Asp252 each contribute to the Ca(2+) site.

This sequence belongs to the peroxidase family. Classical plant (class III) peroxidase subfamily. It depends on heme b as a cofactor. Requires Ca(2+) as cofactor. As to expression, expressed in root cells.

The protein localises to the secreted. The enzyme catalyses 2 a phenolic donor + H2O2 = 2 a phenolic radical donor + 2 H2O. Functionally, removal of H(2)O(2), oxidation of toxic reductants, biosynthesis and degradation of lignin, suberization, auxin catabolism, response to environmental stresses such as wounding, pathogen attack and oxidative stress. These functions might be dependent on each isozyme/isoform in each plant tissue. In Arabidopsis thaliana (Mouse-ear cress), this protein is Peroxidase 3 (PER3).